The sequence spans 182 residues: Adenylate kinase (182 aa).

An ATP-binding site is contributed by 12–17 (GAGKGT). Positions 32 to 61 (STGELLRKEIEMNTNLGIQVKDIMNRGELV) are NMP. AMP is bound by residues Thr33, Arg38, 59 to 61 (ELV), 85 to 88 (GYPR), and Gln92. The segment at 126–132 (LRGRKDD) is LID. Residue Arg127 coordinates ATP. AMP contacts are provided by Arg129 and Arg140. Arg168 contacts ATP.

The protein belongs to the adenylate kinase family. In terms of assembly, monomer.

It localises to the cytoplasm. The enzyme catalyses AMP + ATP = 2 ADP. Its pathway is purine metabolism; AMP biosynthesis via salvage pathway; AMP from ADP: step 1/1. Catalyzes the reversible transfer of the terminal phosphate group between ATP and AMP. Plays an important role in cellular energy homeostasis and in adenine nucleotide metabolism. The polypeptide is Adenylate kinase (Prochlorococcus marinus (strain AS9601)).